Here is a 181-residue protein sequence, read N- to C-terminus: ATP-dependent protease subunit HslV (181 aa).

Threonine 9 is a catalytic residue. 3 residues coordinate Na(+): serine 166, cysteine 169, and threonine 172.

This sequence belongs to the peptidase T1B family. HslV subfamily. As to quaternary structure, a double ring-shaped homohexamer of HslV is capped on each side by a ring-shaped HslU homohexamer. The assembly of the HslU/HslV complex is dependent on binding of ATP.

Its subcellular location is the cytoplasm. The catalysed reaction is ATP-dependent cleavage of peptide bonds with broad specificity.. With respect to regulation, allosterically activated by HslU binding. In terms of biological role, protease subunit of a proteasome-like degradation complex believed to be a general protein degrading machinery. This Staphylococcus haemolyticus (strain JCSC1435) protein is ATP-dependent protease subunit HslV.